The sequence spans 426 residues: F-box protein At2g15640 (426 aa).

The F-box domain maps to 1–48; the sequence is MNPSTITNDLTVEILSRLPAKSVARFHCVSKQWGSIFGSPYFKELFLT.

This Arabidopsis thaliana (Mouse-ear cress) protein is F-box protein At2g15640.